The primary structure comprises 143 residues: MDIQTILEKTLPGLGYELVDFELTAQGTLRVFIDKEGGITVEDCATVSNHLSRVFMVEDIDYKNLEISSPGLDRPLKKAADFVRFAGQNAKIKTRLPIDGQKNFIGKIEGCENDTVTISFDGKTVQIGLDNIDKARLRPEFKF.

It belongs to the RimP family.

Its subcellular location is the cytoplasm. Required for maturation of 30S ribosomal subunits. The protein is Ribosome maturation factor RimP of Neisseria meningitidis serogroup C (strain 053442).